The chain runs to 132 residues: Phosphomevalonate dehydratase small subunit (132 aa).

S58 acts as the Proton acceptor in catalysis.

This sequence belongs to the AcnX type II small subunit family. As to quaternary structure, heterodimer composed of a large subunit (PMDh-L) and a small subunit (PMDh-S).

The catalysed reaction is (R)-5-phosphomevalonate = (2E)-3-methyl-5-phosphooxypent-2-enoate + H2O. The protein operates within isoprenoid biosynthesis; isopentenyl diphosphate biosynthesis via mevalonate pathway. Its activity is regulated as follows. Neither the addition of 1 mM Mg(2+) nor 1 mM Mn(2+) has a significant effect on the activity, whereas Zn(2+) causes almost complete inactivation. Strongly inhibited by H(2)O(2), but not by EDTA or iodoacetamide. In terms of biological role, component of a hydro-lyase that catalyzes the dehydration of mevalonate 5-phosphate (MVA5P) to form trans-anhydromevalonate 5-phosphate (tAHMP). Involved in the archaeal mevalonate (MVA) pathway, which provides fundamental precursors for isoprenoid biosynthesis, such as isopentenyl diphosphate (IPP) and dimethylallyl diphosphate (DMAPP). This is Phosphomevalonate dehydratase small subunit from Aeropyrum pernix (strain ATCC 700893 / DSM 11879 / JCM 9820 / NBRC 100138 / K1).